A 231-amino-acid chain; its full sequence is MAKAVVLLSGGLDSATAAAQAIADGYEAIALSFRYGQRHVRELEAARSVAAALGINQHFFVDVNIAQWGGSSLTDAAEPLPGSGVVAGEIPSTYVPGRNTVFIALALSLAEAQQASAIYLGINAVDYSGYPDCRPDYLAAFQQLASLSSKVGVEGQAPQLVAPLIHDHKVDIVRRAVVLGVPIPATWSCYAGGAEACGRCDSCRIRDRALIEAGYPEWATAIGRSLVSLQP.

Residue 8 to 18 coordinates ATP; the sequence is LSGGLDSATAA. The Zn(2+) site is built by Cys189, Cys197, Cys200, and Cys203.

It belongs to the QueC family. Requires Zn(2+) as cofactor.

The enzyme catalyses 7-carboxy-7-deazaguanine + NH4(+) + ATP = 7-cyano-7-deazaguanine + ADP + phosphate + H2O + H(+). It functions in the pathway purine metabolism; 7-cyano-7-deazaguanine biosynthesis. Its function is as follows. Catalyzes the ATP-dependent conversion of 7-carboxy-7-deazaguanine (CDG) to 7-cyano-7-deazaguanine (preQ(0)). The protein is 7-cyano-7-deazaguanine synthase of Synechococcus elongatus (strain ATCC 33912 / PCC 7942 / FACHB-805) (Anacystis nidulans R2).